The following is a 302-amino-acid chain: Sulfate adenylyltransferase subunit 2 (302 aa).

The protein belongs to the PAPS reductase family. CysD subfamily. As to quaternary structure, heterodimer composed of CysD, the smaller subunit, and CysN.

It catalyses the reaction sulfate + ATP + H(+) = adenosine 5'-phosphosulfate + diphosphate. The protein operates within sulfur metabolism; hydrogen sulfide biosynthesis; sulfite from sulfate: step 1/3. In terms of biological role, with CysN forms the ATP sulfurylase (ATPS) that catalyzes the adenylation of sulfate producing adenosine 5'-phosphosulfate (APS) and diphosphate, the first enzymatic step in sulfur assimilation pathway. APS synthesis involves the formation of a high-energy phosphoric-sulfuric acid anhydride bond driven by GTP hydrolysis by CysN coupled to ATP hydrolysis by CysD. The polypeptide is Sulfate adenylyltransferase subunit 2 (Enterobacter sp. (strain 638)).